The following is a 190-amino-acid chain: Potassium-transporting ATPase KdpC subunit (190 aa).

A helical membrane pass occupies residues 10–30; sequence TFIFLLLITGGVYPLLTTALG.

Belongs to the KdpC family. As to quaternary structure, the system is composed of three essential subunits: KdpA, KdpB and KdpC.

Its subcellular location is the cell inner membrane. Part of the high-affinity ATP-driven potassium transport (or Kdp) system, which catalyzes the hydrolysis of ATP coupled with the electrogenic transport of potassium into the cytoplasm. This subunit acts as a catalytic chaperone that increases the ATP-binding affinity of the ATP-hydrolyzing subunit KdpB by the formation of a transient KdpB/KdpC/ATP ternary complex. The sequence is that of Potassium-transporting ATPase KdpC subunit from Escherichia coli O9:H4 (strain HS).